The primary structure comprises 472 residues: Siroheme synthase 1 (472 aa).

The segment at 1 to 203 (MDYLPLFADL…GQLTEAENEL (203 aa)) is precorrin-2 dehydrogenase /sirohydrochlorin ferrochelatase. NAD(+) is bound by residues 22 to 23 (EV) and 43 to 44 (QT). Position 128 is a phosphoserine (serine 128). Residues 215-472 (GEVALVGAGP…AISPSVVNLA (258 aa)) form a uroporphyrinogen-III C-methyltransferase region. Proline 224 provides a ligand contact to S-adenosyl-L-methionine. Aspartate 247 functions as the Proton acceptor in the catalytic mechanism. The active-site Proton donor is the lysine 269. S-adenosyl-L-methionine contacts are provided by residues 300–302 (GGD), isoleucine 305, 330–331 (TA), methionine 382, and glycine 411.

This sequence in the N-terminal section; belongs to the precorrin-2 dehydrogenase / sirohydrochlorin ferrochelatase family. It in the C-terminal section; belongs to the precorrin methyltransferase family.

The enzyme catalyses uroporphyrinogen III + 2 S-adenosyl-L-methionine = precorrin-2 + 2 S-adenosyl-L-homocysteine + H(+). The catalysed reaction is precorrin-2 + NAD(+) = sirohydrochlorin + NADH + 2 H(+). It carries out the reaction siroheme + 2 H(+) = sirohydrochlorin + Fe(2+). The protein operates within cofactor biosynthesis; adenosylcobalamin biosynthesis; precorrin-2 from uroporphyrinogen III: step 1/1. Its pathway is cofactor biosynthesis; adenosylcobalamin biosynthesis; sirohydrochlorin from precorrin-2: step 1/1. It functions in the pathway porphyrin-containing compound metabolism; siroheme biosynthesis; precorrin-2 from uroporphyrinogen III: step 1/1. It participates in porphyrin-containing compound metabolism; siroheme biosynthesis; siroheme from sirohydrochlorin: step 1/1. The protein operates within porphyrin-containing compound metabolism; siroheme biosynthesis; sirohydrochlorin from precorrin-2: step 1/1. Its function is as follows. Multifunctional enzyme that catalyzes the SAM-dependent methylations of uroporphyrinogen III at position C-2 and C-7 to form precorrin-2 via precorrin-1. Then it catalyzes the NAD-dependent ring dehydrogenation of precorrin-2 to yield sirohydrochlorin. Finally, it catalyzes the ferrochelation of sirohydrochlorin to yield siroheme. The sequence is that of Siroheme synthase 1 from Yersinia pestis bv. Antiqua (strain Nepal516).